The following is a 105-amino-acid chain: Thioredoxin (105 aa).

The Thioredoxin domain maps to 2–105 (VKQIESKYAF…KLEATINELI (104 aa)). At K3 the chain carries N6-acetyllysine. K8 carries the post-translational modification N6-succinyllysine. Residues C32 and C35 each act as nucleophile in the active site. C32 and C35 are oxidised to a cystine. K39 is modified (N6-acetyllysine). 2 positions are modified to S-nitrosocysteine: C62 and C69. C73 is subject to S-nitrosocysteine; alternate. K94 is modified (N6-acetyllysine; alternate). K94 bears the N6-succinyllysine; alternate mark.

It belongs to the thioredoxin family. As to quaternary structure, homodimer; disulfide-linked. Interacts with TXNIP through the redox-active site. Interacts with MAP3K5 and CASP3. Interacts with APEX1; the interaction stimulates the FOS/JUN AP-1 DNA-binding activity in a redox-dependent manner. In the fully reduced protein, both Cys-69 and Cys-73 are nitrosylated in response to nitric oxide (NO). When two disulfide bonds are present in the protein, only Cys-73 is nitrosylated. Cys-73 can serve as donor for nitrosylation of target proteins.

It localises to the nucleus. It is found in the cytoplasm. Its subcellular location is the secreted. Functionally, participates in various redox reactions through the reversible oxidation of its active center dithiol to a disulfide and catalyzes dithiol-disulfide exchange reactions. Plays a role in the reversible S-nitrosylation of cysteine residues in target proteins, and thereby contributes to the response to intracellular nitric oxide. Nitrosylates the active site Cys of CASP3 in response to nitric oxide (NO), and thereby inhibits caspase-3 activity. Induces the FOS/JUN AP-1 DNA binding activity in ionizing radiation (IR) cells through its oxidation/reduction status and stimulates AP-1 transcriptional activity. The polypeptide is Thioredoxin (TXN) (Bos taurus (Bovine)).